Reading from the N-terminus, the 140-residue chain is Ribonuclease P protein subunit p20 (140 aa).

Belongs to the histone-like Alba family. In terms of assembly, component of nuclear RNase P and RNase MRP complexes. RNase P consists of a catalytic RNA moiety and 10 different protein chains; POP1, POP4, POP5, POP7, RPP14, RPP21, RPP25, RPP30, RPP38 and RPP40. Within the RNase P complex, POP1, POP7 and RPP25 form the 'finger' subcomplex, POP5, RPP14, RPP40 and homodimeric RPP30 form the 'palm' subcomplex, and RPP21, POP4 and RPP38 form the 'wrist' subcomplex. All subunits of the RNase P complex interact with the catalytic RNA. Several subunits of RNase P are also part of the RNase MRP complex. RNase MRP consists of a catalytic RNA moiety and about 8 protein subunits; POP1, POP7, RPP25, RPP30, RPP38, RPP40 and possibly also POP4 and POP5. Interacts with SMN1. POP7 forms a heterodimer with RPP25 that binds to the P3 stem loop of the catalytic RNA.

It localises to the nucleus. It is found in the nucleolus. The protein localises to the cytoplasm. Its subcellular location is the cytoplasmic granule. Functionally, component of ribonuclease P, a ribonucleoprotein complex that generates mature tRNA molecules by cleaving their 5'-ends. Also a component of the MRP ribonuclease complex, which cleaves pre-rRNA sequences. The chain is Ribonuclease P protein subunit p20 (POP7) from Homo sapiens (Human).